The following is a 148-amino-acid chain: Hydrogenase expression/formation protein HoxO (148 aa).

The disordered stretch occupies residues 128–148 (IPVLSPESGTPSCSPMETSES). The segment covering 134–148 (ESGTPSCSPMETSES) has biased composition (polar residues).

The protein belongs to the HupG/HyaE family.

The sequence is that of Hydrogenase expression/formation protein HoxO (hoxO) from Azotobacter vinelandii.